The primary structure comprises 246 residues: Large ribosomal subunit protein uL30-like 1 (246 aa).

Ser54 carries the phosphoserine modification.

Belongs to the universal ribosomal protein uL30 family.

The chain is Large ribosomal subunit protein uL30-like 1 (Rpl7l1) from Mus musculus (Mouse).